We begin with the raw amino-acid sequence, 488 residues long: Retinoic acid receptor RXR-alpha (488 aa).

A modulating region spans residues 1 to 160; that stretch reads MSSAAMDTKH…GAMASFTKHI (160 aa). A Glycyl lysine isopeptide (Lys-Gly) (interchain with G-Cter in SUMO) cross-link involves residue Lys-134. Positions 158–233 form a DNA-binding region, nuclear receptor; sequence KHICAICGDR…MGMKREAVQE (76 aa). The Zn(2+) site is built by Cys-161, Cys-164, Cys-178, and Cys-181. The segment at 161–181 adopts an NR C4-type zinc-finger fold; that stretch reads CAICGDRSSGKHYGVYSCEGC. The interval 186–191 is nuclear localization signal; it reads KRTVRK. Residues Cys-197, Cys-203, Cys-213, and Cys-216 each coordinate Zn(2+). The NR C4-type zinc-finger motif lies at 197–216; sequence CRDSKDCMIDKRQRNRCQYC. A hinge region spans residues 227–250; that stretch reads KREAVQEERQRGKERNENEVESSN. Basic and acidic residues predominate over residues 232-244; it reads QEERQRGKERNEN. The disordered stretch occupies residues 232-256; sequence QEERQRGKERNENEVESSNSANEDM. Residues 253 to 484 enclose the NR LBD domain; the sequence is NEDMPVEKIL…TFLMEMLEAP (232 aa). The 9-cis-retinoate site is built by Arg-342 and Ala-353. All-trans-retinoate-binding residues include Arg-342 and Ala-353. Positions 374–394 are required for nuclear export; sequence RVLTELVSKMRDMQMDKTELG. Positions 473–484 are AF-2; it reads IDTFLMEMLEAP.

The protein belongs to the nuclear hormone receptor family. NR2 subfamily. In terms of assembly, homodimer. Heterodimer; with a rar molecule. Binds DNA preferentially as a rar/rxr heterodimer. Interacts with coactivator ncoa3 and with senp6. Sumoylated on Lys-134; which negatively regulates transcriptional activity. Desumoylated specifically by SENP6.

The protein resides in the nucleus. Its function is as follows. Receptor for retinoic acid that acts as a transcription factor. Forms homo- or heterodimers with retinoic acid receptors (rars) and binds to target response elements in response to their ligands, all-trans or 9-cis retinoic acid, to regulate gene expression in various biological processes. The rar/rxr heterodimers bind to the retinoic acid response elements (RARE) composed of tandem 5'-AGGTCA-3' sites known as DR1-DR5 to regulate transcription. The high affinity ligand for rxrs is 9-cis retinoic acid. In the absence of ligand, the rar/rxr heterodimers associate with a multiprotein complex containing transcription corepressors that induce histone deacetylation, chromatin condensation and transcriptional suppression. On ligand binding, the corepressors dissociate from the receptors and coactivators are recruited leading to transcriptional activation. This is Retinoic acid receptor RXR-alpha (rxra) from Xenopus laevis (African clawed frog).